The primary structure comprises 277 residues: Undecaprenyl-diphosphatase (277 aa).

The next 8 membrane-spanning stretches (helical) occupy residues 19–39 (FLPVSSTGHLFLFSSFFPFYG), 44–64 (FDDLFDIFIQSGAILSVLFLY), 89–109 (FHFLIQICIGAFPILIAGFIA), 122–142 (LLEILSGAWIFGGVLILVAEW), 154–174 (IGFKDSILIGIFQCMALIPGM), 195–215 (AEFSFFLAVPVLLAAGIYKLI), 224–244 (NTIPVLMFGFLVSFLLCTLVI), and 257–277 (SVFGVYRILLGVGVLVLTKLI).

It belongs to the UppP family.

It localises to the cell inner membrane. It catalyses the reaction di-trans,octa-cis-undecaprenyl diphosphate + H2O = di-trans,octa-cis-undecaprenyl phosphate + phosphate + H(+). Catalyzes the dephosphorylation of undecaprenyl diphosphate (UPP). Confers resistance to bacitracin. The polypeptide is Undecaprenyl-diphosphatase (Leptospira interrogans serogroup Icterohaemorrhagiae serovar copenhageni (strain Fiocruz L1-130)).